Consider the following 229-residue polypeptide: Urease accessory protein UreF (229 aa).

Belongs to the UreF family. UreD, UreF and UreG form a complex that acts as a GTP-hydrolysis-dependent molecular chaperone, activating the urease apoprotein by helping to assemble the nickel containing metallocenter of UreC. The UreE protein probably delivers the nickel.

It localises to the cytoplasm. Required for maturation of urease via the functional incorporation of the urease nickel metallocenter. The protein is Urease accessory protein UreF of Staphylococcus aureus (strain USA300).